The primary structure comprises 540 residues: 2-isopropylmalate synthase (540 aa).

One can recognise a Pyruvate carboxyltransferase domain in the interval 8–273 (VLIFDTTLRD…FFGRDEDSPT (266 aa)). Mn(2+) is bound by residues aspartate 17, histidine 208, histidine 210, and asparagine 244. Residues 408 to 540 (QLKLVQVSCG…MAQLDSSPVH (133 aa)) are regulatory domain.

Belongs to the alpha-IPM synthase/homocitrate synthase family. LeuA type 1 subfamily. As to quaternary structure, homodimer. Requires Mn(2+) as cofactor.

It localises to the cytoplasm. It carries out the reaction 3-methyl-2-oxobutanoate + acetyl-CoA + H2O = (2S)-2-isopropylmalate + CoA + H(+). It participates in amino-acid biosynthesis; L-leucine biosynthesis; L-leucine from 3-methyl-2-oxobutanoate: step 1/4. Its function is as follows. Catalyzes the condensation of the acetyl group of acetyl-CoA with 3-methyl-2-oxobutanoate (2-ketoisovalerate) to form 3-carboxy-3-hydroxy-4-methylpentanoate (2-isopropylmalate). The polypeptide is 2-isopropylmalate synthase (Synechococcus sp. (strain CC9311)).